The sequence spans 107 residues: Thioredoxin (107 aa).

Residues 2–107 (SATPQVSDAS…TLASTLEKYL (106 aa)) enclose the Thioredoxin domain. An intrachain disulfide couples Cys32 to Cys35.

This sequence belongs to the thioredoxin family.

Component of the thioredoxin-thioredoxin reductase system. Participates in various redox reactions through the reversible oxidation of its active center dithiol to a disulfide and catalyzes dithiol-disulfide exchange reactions. In Synechocystis sp. (strain ATCC 27184 / PCC 6803 / Kazusa), this protein is Thioredoxin (trxA).